A 484-amino-acid polypeptide reads, in one-letter code: Coronin-1B (484 aa).

A Phosphoserine modification is found at Ser-2. WD repeat units follow at residues 80–120 (GHTG…LTSP), 130–170 (GHTK…ELYR), 174–213 (LHPDLIYNVSWNHNGSLFCTACKDKSVRIIDPRRGTLVAE), 217–260 (AHEG…EPMA), and 265–305 (DSSN…PYIH). Residues 447 to 481 (KLEEVMHGLRALRVLVKEQGERISRLEEHLGRMEN) adopt a coiled-coil conformation.

Belongs to the WD repeat coronin family. Forms homooligomers, but does not form complexes with the other coronins. Interacts with Arp2/3 complex components, including ACTR2, ARPC1B and ARPC2. Binds actin. In terms of processing, phosphorylation on Ser-2 regulates the interaction with the Arp2/3 complex and cell motility in fibroblasts. Phosphorylation does not seem to affect subcellular location.

The protein localises to the cytoplasm. It is found in the cytoskeleton. Its subcellular location is the stress fiber. Its function is as follows. Regulates leading edge dynamics and cell motility in fibroblasts. May be involved in cytokinesis and signal transduction. This chain is Coronin-1B (Coro1b), found in Rattus norvegicus (Rat).